Here is a 72-residue protein sequence, read N- to C-terminus: UPF0352 protein NTHI1007 (72 aa).

The protein belongs to the UPF0352 family.

The chain is UPF0352 protein NTHI1007 from Haemophilus influenzae (strain 86-028NP).